Here is a 101-residue protein sequence, read N- to C-terminus: MGKQSMKAREAKRAKLVAKFAEKRAALKVLISDVNASEEERWDAVLKLQSLPRDSSASRQRNRCNQTGRPHGYLRKFGLSRIKVREACMKGEIPGLRKASW.

It belongs to the universal ribosomal protein uS14 family. Part of the 30S ribosomal subunit. Contacts proteins S3 and S10.

In terms of biological role, binds 16S rRNA, required for the assembly of 30S particles and may also be responsible for determining the conformation of the 16S rRNA at the A site. The sequence is that of Small ribosomal subunit protein uS14 from Aliivibrio fischeri (strain ATCC 700601 / ES114) (Vibrio fischeri).